A 335-amino-acid chain; its full sequence is Lipase chaperone (335 aa).

Residues 7-23 (LLPLAIALGLGFFIARP) traverse the membrane as a helical segment.

Belongs to the lipase chaperone family.

The protein localises to the cell inner membrane. Functionally, may be involved in the folding of the extracellular lipase during its passage through the periplasm. The sequence is that of Lipase chaperone (lifO) from Ectopseudomonas mendocina (Pseudomonas mendocina).